Here is a 314-residue protein sequence, read N- to C-terminus: MRPLAIIGPTGAGKSQLALDVAARLGARVSVEIVNADAMQLYRGMDIGTAKLPVSERRGIPHHQLDVLDVTETATVARYQRAAAADIEAIAARGAVPVVVGGSMLYVQSLLDDWSFPATDPSVRARWERRLAEVGVDRLHAELARRDPAAAAAILPTDARRTVRALEVVELTGQPFAASAPRIGAPRWDTVIVGLDCQTTILDERLARRTDLMFDQGLVEEVRTLLRNGLREGVTASRALGYAQVIAALDAGAGADMMRAAREQTYLGTRRYVRRQRSWFRRDHRVHWLDAGVASSPDRARLVDDAVRLWRHVT.

8–15 (GPTGAGKS) is an ATP binding site. Residue 10–15 (TGAGKS) coordinates substrate.

Belongs to the IPP transferase family. Monomer. It depends on Mg(2+) as a cofactor.

The catalysed reaction is adenosine(37) in tRNA + dimethylallyl diphosphate = N(6)-dimethylallyladenosine(37) in tRNA + diphosphate. In terms of biological role, catalyzes the transfer of a dimethylallyl group onto the adenine at position 37 in tRNAs that read codons beginning with uridine, leading to the formation of N6-(dimethylallyl)adenosine (i(6)A). This chain is tRNA dimethylallyltransferase, found in Mycobacterium tuberculosis (strain ATCC 25177 / H37Ra).